Here is a 285-residue protein sequence, read N- to C-terminus: Protein unc-1 (285 aa).

2 helical membrane passes run 27-47 (IGTI…IVTF) and 69-89 (IGRL…IPCI).

It belongs to the band 7/mec-2 family.

Its subcellular location is the cell membrane. It localises to the cell junction. The protein resides in the gap junction. In Caenorhabditis elegans, this protein is Protein unc-1 (unc-1).